A 98-amino-acid polypeptide reads, in one-letter code: NADH-ubiquinone oxidoreductase chain 4L (98 aa).

3 consecutive transmembrane segments (helical) span residues 1–21, 29–49, and 58–78; these read MTPV…GLAF, ALLC…LWAL, and VAPM…LALL.

Belongs to the complex I subunit 4L family.

The protein localises to the mitochondrion membrane. It carries out the reaction a ubiquinone + NADH + 5 H(+)(in) = a ubiquinol + NAD(+) + 4 H(+)(out). Its function is as follows. Core subunit of the mitochondrial membrane respiratory chain NADH dehydrogenase (Complex I) which catalyzes electron transfer from NADH through the respiratory chain, using ubiquinone as an electron acceptor. Part of the enzyme membrane arm which is embedded in the lipid bilayer and involved in proton translocation. This is NADH-ubiquinone oxidoreductase chain 4L (MT-ND4L) from Oncorhynchus clarkii (Cutthroat trout).